Here is a 368-residue protein sequence, read N- to C-terminus: Probable dual-specificity RNA methyltransferase RlmN (368 aa).

Glu-108 acts as the Proton acceptor in catalysis. A Radical SAM core domain is found at 114-345; the sequence is HAYGNSVCVS…VTVRRGLGAD (232 aa). Cys-121 and Cys-350 form a disulfide bridge. Cys-128, Cys-132, and Cys-135 together coordinate [4Fe-4S] cluster. Residues 175-176, Ser-207, 230-232, and Asn-307 contribute to the S-adenosyl-L-methionine site; these read GE and SLH. Cys-350 serves as the catalytic S-methylcysteine intermediate.

Belongs to the radical SAM superfamily. RlmN family. [4Fe-4S] cluster is required as a cofactor.

The protein resides in the cytoplasm. It catalyses the reaction adenosine(2503) in 23S rRNA + 2 reduced [2Fe-2S]-[ferredoxin] + 2 S-adenosyl-L-methionine = 2-methyladenosine(2503) in 23S rRNA + 5'-deoxyadenosine + L-methionine + 2 oxidized [2Fe-2S]-[ferredoxin] + S-adenosyl-L-homocysteine. The catalysed reaction is adenosine(37) in tRNA + 2 reduced [2Fe-2S]-[ferredoxin] + 2 S-adenosyl-L-methionine = 2-methyladenosine(37) in tRNA + 5'-deoxyadenosine + L-methionine + 2 oxidized [2Fe-2S]-[ferredoxin] + S-adenosyl-L-homocysteine. Functionally, specifically methylates position 2 of adenine 2503 in 23S rRNA and position 2 of adenine 37 in tRNAs. The sequence is that of Probable dual-specificity RNA methyltransferase RlmN from Pelotomaculum thermopropionicum (strain DSM 13744 / JCM 10971 / SI).